A 264-amino-acid polypeptide reads, in one-letter code: S-adenosylmethionine decarboxylase proenzyme (264 aa).

Residue S113 is the Schiff-base intermediate with substrate; via pyruvic acid of the active site. S113 is subject to Pyruvic acid (Ser); by autocatalysis. H118 functions as the Proton acceptor; for processing activity in the catalytic mechanism. The active-site Proton donor; for catalytic activity is the C141.

This sequence belongs to the prokaryotic AdoMetDC family. Type 2 subfamily. Heterooctamer of four alpha and four beta chains arranged as a tetramer of alpha/beta heterodimers. Pyruvate serves as cofactor. In terms of processing, is synthesized initially as an inactive proenzyme. Formation of the active enzyme involves a self-maturation process in which the active site pyruvoyl group is generated from an internal serine residue via an autocatalytic post-translational modification. Two non-identical subunits are generated from the proenzyme in this reaction, and the pyruvate is formed at the N-terminus of the alpha chain, which is derived from the carboxyl end of the proenzyme. The post-translation cleavage follows an unusual pathway, termed non-hydrolytic serinolysis, in which the side chain hydroxyl group of the serine supplies its oxygen atom to form the C-terminus of the beta chain, while the remainder of the serine residue undergoes an oxidative deamination to produce ammonia and the pyruvoyl group blocking the N-terminus of the alpha chain.

The enzyme catalyses S-adenosyl-L-methionine + H(+) = S-adenosyl 3-(methylsulfanyl)propylamine + CO2. It participates in amine and polyamine biosynthesis; S-adenosylmethioninamine biosynthesis; S-adenosylmethioninamine from S-adenosyl-L-methionine: step 1/1. Catalyzes the decarboxylation of S-adenosylmethionine to S-adenosylmethioninamine (dcAdoMet), the propylamine donor required for the synthesis of the polyamines spermine and spermidine from the diamine putrescine. This chain is S-adenosylmethionine decarboxylase proenzyme, found in Xanthomonas euvesicatoria pv. vesicatoria (strain 85-10) (Xanthomonas campestris pv. vesicatoria).